The sequence spans 461 residues: Kynurenine 3-monooxygenase (461 aa).

The next 2 membrane-spanning stretches (helical) occupy residues 395–415 (GFMN…VTFT) and 432–452 (ILSN…AIGI).

This sequence belongs to the aromatic-ring hydroxylase family. KMO subfamily. The cofactor is FAD.

The protein resides in the mitochondrion. It is found in the membrane. It catalyses the reaction L-kynurenine + NADPH + O2 + H(+) = 3-hydroxy-L-kynurenine + NADP(+) + H2O. The protein operates within cofactor biosynthesis; NAD(+) biosynthesis; quinolinate from L-kynurenine: step 1/3. Its function is as follows. Catalyzes the hydroxylation of L-kynurenine (L-Kyn) to form 3-hydroxy-L-kynurenine (L-3OHKyn). Required for synthesis of quinolinic acid. This is Kynurenine 3-monooxygenase from Caenorhabditis briggsae.